A 540-amino-acid polypeptide reads, in one-letter code: Sterol 14-alpha demethylase (540 aa).

The helical transmembrane segment at 41–61 threads the bilayer; that stretch reads PLFLVSGFLGVCVAYAVANII. Residue C485 coordinates heme.

It belongs to the cytochrome P450 family. It depends on heme as a cofactor.

It localises to the membrane. The catalysed reaction is a 14alpha-methyl steroid + 3 reduced [NADPH--hemoprotein reductase] + 3 O2 = a Delta(14) steroid + formate + 3 oxidized [NADPH--hemoprotein reductase] + 4 H2O + 4 H(+). It carries out the reaction a 14alpha-methyl steroid + reduced [NADPH--hemoprotein reductase] + O2 = a 14alpha-hydroxymethyl steroid + oxidized [NADPH--hemoprotein reductase] + H2O + H(+). The enzyme catalyses a 14alpha-hydroxymethyl steroid + reduced [NADPH--hemoprotein reductase] + O2 = a 14alpha-formyl steroid + oxidized [NADPH--hemoprotein reductase] + 2 H2O + H(+). It catalyses the reaction a 14alpha-formyl steroid + reduced [NADPH--hemoprotein reductase] + O2 = a Delta(14) steroid + formate + oxidized [NADPH--hemoprotein reductase] + H2O + 2 H(+). The catalysed reaction is lanosterol + 3 reduced [NADPH--hemoprotein reductase] + 3 O2 = 4,4-dimethyl-5alpha-cholesta-8,14,24-trien-3beta-ol + formate + 3 oxidized [NADPH--hemoprotein reductase] + 4 H2O + 4 H(+). It carries out the reaction lanosterol + reduced [NADPH--hemoprotein reductase] + O2 = 32-hydroxylanosterol + oxidized [NADPH--hemoprotein reductase] + H2O + H(+). The enzyme catalyses 32-hydroxylanosterol + reduced [NADPH--hemoprotein reductase] + O2 = 32-oxolanosterol + oxidized [NADPH--hemoprotein reductase] + 2 H2O + H(+). It catalyses the reaction 32-oxolanosterol + reduced [NADPH--hemoprotein reductase] + O2 = 4,4-dimethyl-5alpha-cholesta-8,14,24-trien-3beta-ol + formate + oxidized [NADPH--hemoprotein reductase] + H2O + 2 H(+). The catalysed reaction is eburicol + 3 reduced [NADPH--hemoprotein reductase] + 3 O2 = 14-demethyleburicol + formate + 3 oxidized [NADPH--hemoprotein reductase] + 4 H2O + 4 H(+). It carries out the reaction eburicol + reduced [NADPH--hemoprotein reductase] + O2 = 32-hydroxyeburicol + oxidized [NADPH--hemoprotein reductase] + H2O + H(+). The enzyme catalyses 32-hydroxyeburicol + reduced [NADPH--hemoprotein reductase] + O2 = 32-oxoeburicol + oxidized [NADPH--hemoprotein reductase] + 2 H2O + H(+). It catalyses the reaction 32-oxoeburicol + reduced [NADPH--hemoprotein reductase] + O2 = 14-demethyleburicol + formate + oxidized [NADPH--hemoprotein reductase] + H2O + 2 H(+). The protein operates within steroid biosynthesis; sterol biosynthesis. Its function is as follows. Sterol 14-alpha demethylase; part of the gene cluster that mediates the biosynthesis of tetrahydropyranyl antifungal agent lanomycin that acts as an inhibitor of CYP51 and blocks the ergosterol biosynthesis. Sterol 14-alpha-demethylase plays a critical role in the biosynthesis of ergosterol, the major sterol component in fungal membranes that participates in a variety of functions. Acts as a self-resistant CYP51 that contains mutations found in CYP51s isolated from azole resistance strains and that is not inhibited by the final product of the cluster, lanomycin. The chain is Sterol 14-alpha demethylase from Pyrenophora dematioidea (Helminthosporium dematioideum).